A 290-amino-acid polypeptide reads, in one-letter code: Ribonuclease HIII (290 aa).

The region spanning 78-290 (LPLIGTDEVG…FKNTEKAKNA (213 aa)) is the RNase H type-2 domain. A divalent metal cation contacts are provided by Asp84, Glu85, and Asp187.

The protein belongs to the RNase HII family. RnhC subfamily. It depends on Mn(2+) as a cofactor. Mg(2+) serves as cofactor.

The protein resides in the cytoplasm. The catalysed reaction is Endonucleolytic cleavage to 5'-phosphomonoester.. Functionally, endonuclease that specifically degrades the RNA of RNA-DNA hybrids. This Streptococcus pneumoniae (strain CGSP14) protein is Ribonuclease HIII.